A 502-amino-acid polypeptide reads, in one-letter code: Maturase K (502 aa).

Belongs to the intron maturase 2 family. MatK subfamily.

The protein resides in the plastid. The protein localises to the chloroplast. Usually encoded in the trnK tRNA gene intron. Probably assists in splicing its own and other chloroplast group II introns. The polypeptide is Maturase K (Spiraea cantoniensis (Reeve's meadowsweet)).